Consider the following 499-residue polypeptide: Glycerol kinase (499 aa).

Position 13 (Thr-13) interacts with ADP. Thr-13, Thr-14, and Ser-15 together coordinate ATP. Thr-13 provides a ligand contact to sn-glycerol 3-phosphate. Arg-17 provides a ligand contact to ADP. Residues Arg-83, Glu-84, Tyr-135, and Asp-245 each contribute to the sn-glycerol 3-phosphate site. Glycerol is bound by residues Arg-83, Glu-84, Tyr-135, Asp-245, and Gln-246. ADP contacts are provided by Thr-267 and Gly-310. ATP-binding residues include Thr-267, Gly-310, Gln-314, and Gly-411. ADP contacts are provided by Gly-411 and Asn-415.

This sequence belongs to the FGGY kinase family. As to quaternary structure, homotetramer and homodimer (in equilibrium).

It carries out the reaction glycerol + ATP = sn-glycerol 3-phosphate + ADP + H(+). Its pathway is polyol metabolism; glycerol degradation via glycerol kinase pathway; sn-glycerol 3-phosphate from glycerol: step 1/1. With respect to regulation, activated by phosphorylation and inhibited by fructose 1,6-bisphosphate (FBP). Key enzyme in the regulation of glycerol uptake and metabolism. Catalyzes the phosphorylation of glycerol to yield sn-glycerol 3-phosphate. In Halothermothrix orenii (strain H 168 / OCM 544 / DSM 9562), this protein is Glycerol kinase.